The following is a 993-amino-acid chain: P3N-PIPO polyprotein (993 aa).

The Peptidase S30 domain maps to 154-298 (GVTPYSVQQL…ESTMLSTHHY (145 aa)). Residues histidine 207, aspartate 216, and serine 249 each act as for P1 proteinase activity in the active site. The short motif at 349-352 (KITC) is the Involved in interaction with stylet and aphid transmission element. An Involved in virions binding and aphid transmission motif is present at residues 607 to 609 (PTK). In terms of domain architecture, Peptidase C6 spans 633 to 755 (MYIAKSGYCY…DSEMKHYRVG (123 aa)). Residues cysteine 641 and histidine 714 each act as for helper component proteinase activity in the active site.

Belongs to the potyviridae P3N-PIPO polyprotein family. In terms of assembly, interacts (via PIPO domain) with host PCaP1 protein; this interaction may help to anchor the movement complex to the plasma membrane from which the complex could move to the plasmodesmata. Potyviral RNA is expressed as two polyproteins which undergo post-translational proteolytic processing. Genome polyprotein is processed by NIa-pro, P1 and HC-pro proteinases resulting in the production of at least ten individual proteins. P3N-PIPO is cleaved by P1 and HC-pro proteinases resulting in the production of three individual proteins. The P1 proteinase and the HC-pro cleave only their respective C-termini autocatalytically.

It is found in the host cell junction. The protein resides in the host plasmodesma. The catalysed reaction is Hydrolyzes a Gly-|-Gly bond at its own C-terminus, commonly in the sequence -Tyr-Xaa-Val-Gly-|-Gly, in the processing of the potyviral polyprotein.. In terms of biological role, required for aphid transmission and also has proteolytic activity. Only cleaves a Gly-Gly dipeptide at its own C-terminus. Interacts with virions and aphid stylets. Acts as a suppressor of RNA-mediated gene silencing, also known as post-transcriptional gene silencing (PTGS), a mechanism of plant viral defense that limits the accumulation of viral RNAs. May have RNA-binding activity. Its function is as follows. Allows efficient cell to cell propagation, by bypassing the host cell wall barrier. Transports viral genome to neighboring plant cells directly through plasmosdesmata, without any budding. The chain is P3N-PIPO polyprotein from Solanum betaceum (Tamarillo).